Reading from the N-terminus, the 642-residue chain is Nocturnin (642 aa).

The interval 50-87 is disordered; sequence LEDDDKPPQLFSVTDEPPSPNEEDYKPPNHHEDDGKLA. Residues 72–87 are compositionally biased toward basic and acidic residues; the sequence is EDYKPPNHHEDDGKLA. Residue glutamate 363 coordinates Mg(2+). Substrate contacts are provided by residues glutamate 363, asparagine 430, 453–456, 491–493, and histidine 600; these read HLKA and DFN. The tract at residues 611–642 is disordered; that stretch reads PPTENGKESGSGSGSDGENETEVEGSKHGSIQ.

It belongs to the CCR4/nocturin family. Associates to the CCR4-NOT complex composed of at least Pop2/Caf1-55, Ccr4, Not1, Rga/Not2, and Not3. Mg(2+) serves as cofactor. Expressed in the head, in the dorsal neurons DN3, a subgroup of clock neurons (at protein level). Ubiquitously expressed in both males and females.

It localises to the cytoplasm. The enzyme catalyses NADP(+) + H2O = phosphate + NAD(+). It catalyses the reaction NADPH + H2O = phosphate + NADH. Phosphatase which catalyzes the conversion of NADP(+) to NAD(+) and of NADPH to NADH. Shows a small preference for NADPH over NADP(+). Because of its association with the CCR4-NOT complex, has a role in mRNA deadenylation and decay. Required at the pupal stage for proper wing morphogenesis after eclosion. Its function is as follows. Doesn't have a role in light-mediated behavioral response. In terms of biological role, in dorsal neurons, contributes to the light-mediated behavioral response. The protein is Nocturnin of Drosophila melanogaster (Fruit fly).